Reading from the N-terminus, the 359-residue chain is Short chain dehydrogenase resG (359 aa).

NADP(+)-binding residues include Lys-87, Asp-110, Asn-137, Tyr-237, and Lys-241. The active-site Proton donor is the Tyr-237. Lys-241 serves as the catalytic Lowers pKa of active site Tyr.

Belongs to the short-chain dehydrogenases/reductases (SDR) family.

It functions in the pathway antifungal biosynthesis. Short chain dehydrogenase; part of the gene cluster that mediates the biosynthesis of the tetrahydropyranyl antifungal agent restricticin that acts as an inhibitor of CYP51 and blocks the ergosterol biosynthesis. The highly reducing polyketide synthase resH, the short chain dehydrogenase resG, the cyclase resF, the FAD-dependent monooxygenase resA and the enoylreductase resD are required to generate the first stable intermediate desmethylrestrictinol. ResH with resD biosynthesize the first polyketide chain intermediate that is reduced by resG, followed by epoxidation by resA before 6-endo cyclization via epoxide opening by resF leads to desmethylrestrictinol. The methyltransferase resE then catalyzes the C4 O-methylation of desmethylrestrictinol to produce restrictinol, and the nonribosomal peptide synthetase resC catalyzes the C3 esterification of restrictinol with glycine that leads to restricticin. The polypeptide is Short chain dehydrogenase resG (Aspergillus sclerotiorum).